A 118-amino-acid chain; its full sequence is Hydrogenase maturation factor HypA (118 aa).

Ni(2+) is bound at residue H2. 4 residues coordinate Zn(2+): C73, C76, C89, and C92.

The protein belongs to the HypA/HybF family.

Involved in the maturation of [NiFe] hydrogenases. Required for nickel insertion into the metal center of the hydrogenase. This Shewanella oneidensis (strain ATCC 700550 / JCM 31522 / CIP 106686 / LMG 19005 / NCIMB 14063 / MR-1) protein is Hydrogenase maturation factor HypA.